The chain runs to 887 residues: Putative RNA-binding protein 15B (887 aa).

The segment at 1–132 (MKRQSERDSS…EPAGPGSTAA (132 aa)) is disordered. Over residues 10-20 (SPSGRGSSSSA) the composition is skewed to low complexity. 2 stretches are compositionally biased toward basic and acidic residues: residues 22–34 (RPRE…EAGG) and 65–77 (GHRD…DANH). A compositionally biased stretch (gly residues) spans 83–94 (RSSGAPGGGGRT). Over residues 95–110 (GKASGDPGAGGASPRA) the composition is skewed to low complexity. 2 positions are modified to phosphoserine: Ser107 and Ser111. The segment covering 111-122 (SPLPPPPPPPGA) has biased composition (pro residues). The span at 123 to 132 (EPAGPGSTAA) shows a compositional bias: low complexity. Residues 136–216 (KTLLISSLSP…RPLKVEPVYL (81 aa)) enclose the RRM 1 domain. Lys210 participates in a covalent cross-link: Glycyl lysine isopeptide (Lys-Gly) (interchain with G-Cter in SUMO2). The disordered stretch occupies residues 215 to 249 (YLRGGGSSRRSSSSSAAASTPPPGPPAPADPLGYL). Residues 222-233 (SRRSSSSSAAAS) are compositionally biased toward low complexity. Positions 234-243 (TPPPGPPAPA) are enriched in pro residues. A phosphoserine mark is found at Ser261 and Ser263. RRM domains lie at 333–410 (RNLF…YGKA) and 414–488 (TRLW…FAKA). Thr529 bears the Phosphothreonine mark. Phosphoserine occurs at positions 549, 553, and 559. A disordered region spans residues 549-703 (SLSKSSDRRN…TLEEPKHETK (155 aa)). Composition is skewed to basic and acidic residues over residues 570–613 (RSGE…ERSR), 623–643 (RGSD…EGTK), and 668–700 (EAPD…EPKH). The Nuclear localization signal signature appears at 590–594 (RRKRR). Lys699 participates in a covalent cross-link: Glycyl lysine isopeptide (Lys-Gly) (interchain with G-Cter in SUMO2). In terms of domain architecture, SPOC spans 708–886 (LSEYAQTLQL…HMVIVIVRDT (179 aa)). The interval 719-887 (WNGLLVLKNS…MVIVIVRDTA (169 aa)) is interaction with Epstein-Barr virus BMLF1.

It belongs to the RRM Spen family. As to quaternary structure, component of the WMM complex, a N6-methyltransferase complex composed of a catalytic subcomplex, named MAC, and of an associated subcomplex, named MACOM. The MAC subcomplex is composed of METTL3 and METTL14. The MACOM subcomplex is composed of WTAP, ZC3H13, CBLL1/HAKAI, VIRMA, and, in some cases of RBM15 (RBM15 or RBM15B). May interact with NCOR2. Interacts with NXF1, the interaction is required to promote mRNA export.

It localises to the nucleus. Its subcellular location is the nucleoplasm. The protein localises to the nucleus speckle. The protein resides in the nucleus envelope. Functionally, RNA-binding protein that acts as a key regulator of N6-methyladenosine (m6A) methylation of RNAs, thereby regulating different processes, such as alternative splicing of mRNAs and X chromosome inactivation mediated by Xist RNA. Associated component of the WMM complex, a complex that mediates N6-methyladenosine (m6A) methylation of RNAs, a modification that plays a role in the efficiency of mRNA splicing and RNA processing. Plays a key role in m6A methylation, possibly by binding target RNAs and recruiting the WMM complex. Involved in random X inactivation mediated by Xist RNA: acts by binding Xist RNA and recruiting the WMM complex, which mediates m6A methylation, leading to target YTHDC1 reader on Xist RNA and promoting transcription repression activity of Xist. Functions in the regulation of alternative or illicit splicing, possibly by regulating m6A methylation. Inhibits pre-mRNA splicing. Also functions as a mRNA export factor by acting as a cofactor for the nuclear export receptor NXF1. The polypeptide is Putative RNA-binding protein 15B (Rbm15b) (Mus musculus (Mouse)).